The sequence spans 41 residues: Competence-stimulating peptide type 2 (41 aa).

The propeptide occupies 1 to 24 (MKNTVKLEQFVALKEKDLQKIKGG).

The protein belongs to the ComC family.

Its subcellular location is the secreted. Acts as a pheromone, induces cells to develop competence for genetic transformation. This Streptococcus pneumoniae serotype 4 (strain ATCC BAA-334 / TIGR4) protein is Competence-stimulating peptide type 2 (comC2).